The chain runs to 363 residues: Phosphoserine aminotransferase (363 aa).

Arg-42 contributes to the L-glutamate binding site. Residues 76-77, Trp-102, Thr-156, Asp-175, and Gln-198 contribute to the pyridoxal 5'-phosphate site; that span reads GR. At Lys-199 the chain carries N6-(pyridoxal phosphate)lysine. Position 240–241 (240–241) interacts with pyridoxal 5'-phosphate; the sequence is NT.

This sequence belongs to the class-V pyridoxal-phosphate-dependent aminotransferase family. SerC subfamily. In terms of assembly, homodimer. Pyridoxal 5'-phosphate is required as a cofactor.

It localises to the cytoplasm. The enzyme catalyses O-phospho-L-serine + 2-oxoglutarate = 3-phosphooxypyruvate + L-glutamate. It catalyses the reaction 4-(phosphooxy)-L-threonine + 2-oxoglutarate = (R)-3-hydroxy-2-oxo-4-phosphooxybutanoate + L-glutamate. It participates in amino-acid biosynthesis; L-serine biosynthesis; L-serine from 3-phospho-D-glycerate: step 2/3. Its pathway is cofactor biosynthesis; pyridoxine 5'-phosphate biosynthesis; pyridoxine 5'-phosphate from D-erythrose 4-phosphate: step 3/5. Catalyzes the reversible conversion of 3-phosphohydroxypyruvate to phosphoserine and of 3-hydroxy-2-oxo-4-phosphonooxybutanoate to phosphohydroxythreonine. The polypeptide is Phosphoserine aminotransferase (Shewanella sp. (strain ANA-3)).